A 1114-amino-acid polypeptide reads, in one-letter code: MWLKPEEVLLKNALKLWLMERSNEYFVLQRRRGYGEEGGGGLTGLLVGTLDSVLDSTAKVAPFRILHQTPDSQVYLSIACGANREEITKHWDWLEQNIMKTLSVFDSNEDITNFVQGKIRGLIAEEGKQSFAKEDDPEKFREALLKFEKSFGLPEQEKLVTYYSCSYWRGRVPCQGWLYLSTNFLSFYSFLLGSEIKLIISWDAISKLEKTSTVILTESIHVCSQGENHYFSMFLHINETYLLMEQLANYAIKRLFDKETFDNDPVLDDPLQITKRGLEYRAHSEQFKAFFRLPKEETLKEVHECFLWVPFSHFSSHGKMCISENYICFASQDGNLCSVIIPLREVLAIDKTDDSNRSVIISIKGKTAFRFSELKDFEQLVAKLRLKCRAASTQDDVSTEVAVSSDSTGPSENFEEQPLTCPKECSKTVNTEALMTVFHPQNLENLDSKMLKEKMKEQSWNILFSECGRGVSMFRTKKTRDLVVRGIPETLRGELWMLFSGAVNDMATNPGYYAEVVEQSLGTSNLATEEIERDLRRSLPEHPAFQSDTGISALRRVLTAYAYRNPKIGYCQAMNILTSVLLLYAKEEEAFWLLVAVCERMLPDYFNRRIIGALVDQAVFEELIRDHLPQLTDHMTDMTFFSSVSLSWFLTLFISVLPIESAVNVVDCFFYDGIKAILQLGLAILDYNLDKLLTCKDDAEAVTALNRFFDNVINKDSPLPSNVQQGSNISNEKSDHTKVDITDLIKESNEKYGSIRYEDIHSMRCRNRLYVIQTLEETTKQNVLRVVSQDVKMSLQELDELYVIFKKELFISCYWYLSCPGLKHHDPSLPYLEQYQIDCQQFRVLYHLLSPWAHSANRDSLALWTFRLLDENSDCLINFKEFSSAIDIMYNGSFTDKLKLLFKLHIPPAYTEVMSKTSSKGDELSTEELLYFSQLQVSKPADEKETESGRNSPEKGKGKIDIQAYLSQWQDELLKKEETIKDLPRMNQSQFIQFSKTLYNLFHEDPEEESLYQAIAIVTNLLLRMEEVGRKLHSPASSASTARDSGPSEGNAESSVKKDLPSPREEHQWSFAFEQILASLLNEPALVRFFERPLDLKAKLENAKSSQLRSRTKM.

GRAM domains follow at residues 145–212 and 285–353; these read LKFE…EKTS and EQFK…DKTD. The span at 399–411 shows a compositional bias: polar residues; it reads TEVAVSSDSTGPS. Residues 399 to 420 are disordered; it reads TEVAVSSDSTGPSENFEEQPLT. A Rab-GAP TBC domain is found at 486 to 673; it reads GIPETLRGEL…NVVDCFFYDG (188 aa). Positions 857-892 constitute an EF-hand domain; that stretch reads NRDSLALWTFRLLDENSDCLINFKEFSSAIDIMYNG. Disordered stretches follow at residues 938–957 and 1032–1061; these read SKPADEKETESGRNSPEKGK and LHSPASSASTARDSGPSEGNAESSVKKDLP. The segment covering 940 to 957 has biased composition (basic and acidic residues); the sequence is PADEKETESGRNSPEKGK.

Interacts (via domain Rab-GAP TBC) with RAB11B (in GTP-bound form).

The protein resides in the cytoplasm. The protein localises to the cytosol. In terms of biological role, involved in vesicular recycling, probably as a RAB11B GTPase-activating protein. The protein is TBC1 domain family member 8B (Tbc1d8b) of Mus musculus (Mouse).